Here is a 277-residue protein sequence, read N- to C-terminus: Undecaprenyl-diphosphatase (277 aa).

7 helical membrane passes run 3-23, 43-63, 85-105, 109-129, 189-209, 218-238, and 249-269; these read IVLL…EFLP, VGKV…ILVY, LNVL…GKAI, LFTP…ILWA, TDFS…YSLF, ADLP…WLCI, and SFVG…ATAW.

The protein belongs to the UppP family.

The protein localises to the cell inner membrane. It catalyses the reaction di-trans,octa-cis-undecaprenyl diphosphate + H2O = di-trans,octa-cis-undecaprenyl phosphate + phosphate + H(+). In terms of biological role, catalyzes the dephosphorylation of undecaprenyl diphosphate (UPP). Confers resistance to bacitracin. This Albidiferax ferrireducens (strain ATCC BAA-621 / DSM 15236 / T118) (Rhodoferax ferrireducens) protein is Undecaprenyl-diphosphatase.